The following is a 65-amino-acid chain: Large ribosomal subunit protein bL35 (65 aa).

Positions Met-1–Thr-15 are enriched in basic residues. The tract at residues Met-1–Ala-27 is disordered.

Belongs to the bacterial ribosomal protein bL35 family.

The polypeptide is Large ribosomal subunit protein bL35 (Cupriavidus pinatubonensis (strain JMP 134 / LMG 1197) (Cupriavidus necator (strain JMP 134))).